The following is a 262-amino-acid chain: Thiazole synthase (262 aa).

Lys96 acts as the Schiff-base intermediate with DXP in catalysis. 1-deoxy-D-xylulose 5-phosphate contacts are provided by residues Gly157, 184 to 185, and 206 to 207; these read AG and NT.

Belongs to the ThiG family. In terms of assembly, homotetramer. Forms heterodimers with either ThiH or ThiS.

The protein localises to the cytoplasm. It carries out the reaction [ThiS sulfur-carrier protein]-C-terminal-Gly-aminoethanethioate + 2-iminoacetate + 1-deoxy-D-xylulose 5-phosphate = [ThiS sulfur-carrier protein]-C-terminal Gly-Gly + 2-[(2R,5Z)-2-carboxy-4-methylthiazol-5(2H)-ylidene]ethyl phosphate + 2 H2O + H(+). It functions in the pathway cofactor biosynthesis; thiamine diphosphate biosynthesis. In terms of biological role, catalyzes the rearrangement of 1-deoxy-D-xylulose 5-phosphate (DXP) to produce the thiazole phosphate moiety of thiamine. Sulfur is provided by the thiocarboxylate moiety of the carrier protein ThiS. In vitro, sulfur can be provided by H(2)S. In Legionella pneumophila (strain Lens), this protein is Thiazole synthase.